The chain runs to 159 residues: Large ribosomal subunit protein bL35c (159 aa).

A chloroplast-targeting transit peptide spans Met1 to Ala86.

As to quaternary structure, component of the chloroplast large ribosomal subunit (LSU). Mature 70S chloroplast ribosomes of higher plants consist of a small (30S) and a large (50S) subunit. The 30S small subunit contains 1 molecule of ribosomal RNA (16S rRNA) and 24 different proteins. The 50S large subunit contains 3 rRNA molecules (23S, 5S and 4.5S rRNA) and 33 different proteins.

The protein resides in the plastid. It is found in the chloroplast. In terms of biological role, component of the chloroplast ribosome (chloro-ribosome), a dedicated translation machinery responsible for the synthesis of chloroplast genome-encoded proteins, including proteins of the transcription and translation machinery and components of the photosynthetic apparatus. This is Large ribosomal subunit protein bL35c (RPL35) from Spinacia oleracea (Spinach).